Reading from the N-terminus, the 308-residue chain is Small ribosomal subunit protein uS5c (308 aa).

The transit peptide at 1–55 directs the protein to the chloroplast; sequence MATTATTTPSATSLTTLHRRIPLFPTTTTLLSLSSSSKPLFLSLSSTRSFPTHLY. The S5 DRBM domain maps to 152 to 215; sequence FEENVVQVRR…VDARRNIITV (64 aa).

In terms of assembly, component of the chloroplast small ribosomal subunit (SSU). Mature 70S chloroplast ribosomes of higher plants consist of a small (30S) and a large (50S) subunit. The 30S small subunit contains 1 molecule of ribosomal RNA (16S rRNA) and 24 different proteins. The 50S large subunit contains 3 rRNA molecules (23S, 5S and 4.5S rRNA) and 33 different proteins. uS5c binds directly to 16S ribosomal RNA.

Its subcellular location is the plastid. It localises to the chloroplast. Component of the chloroplast ribosome (chloro-ribosome), a dedicated translation machinery responsible for the synthesis of chloroplast genome-encoded proteins, including proteins of the transcription and translation machinery and components of the photosynthetic apparatus. This is Small ribosomal subunit protein uS5c (rps5) from Spinacia oleracea (Spinach).